We begin with the raw amino-acid sequence, 209 residues long: Uracil phosphoribosyltransferase (209 aa).

5-phospho-alpha-D-ribose 1-diphosphate-binding positions include Arg-79, Arg-104, and 131 to 139 (DPMLATGGS). Uracil contacts are provided by residues Ile-194 and 199 to 201 (GDA). Asp-200 provides a ligand contact to 5-phospho-alpha-D-ribose 1-diphosphate.

Belongs to the UPRTase family. Mg(2+) serves as cofactor.

It catalyses the reaction UMP + diphosphate = 5-phospho-alpha-D-ribose 1-diphosphate + uracil. It participates in pyrimidine metabolism; UMP biosynthesis via salvage pathway; UMP from uracil: step 1/1. Allosterically activated by GTP. In terms of biological role, catalyzes the conversion of uracil and 5-phospho-alpha-D-ribose 1-diphosphate (PRPP) to UMP and diphosphate. The chain is Uracil phosphoribosyltransferase from Macrococcus caseolyticus (strain JCSC5402) (Macrococcoides caseolyticum).